Here is a 300-residue protein sequence, read N- to C-terminus: Probable alpha-L-glutamate ligase (300 aa).

In terms of domain architecture, ATP-grasp spans 104–287 (LQLLARQGID…IASRMIAWIE (184 aa)). ATP contacts are provided by residues lysine 141, 178 to 179 (EY), aspartate 187, and 211 to 213 (RSN). Mg(2+) contacts are provided by aspartate 248, glutamate 260, and asparagine 262. 3 residues coordinate Mn(2+): aspartate 248, glutamate 260, and asparagine 262.

Belongs to the RimK family. It depends on Mg(2+) as a cofactor. Mn(2+) is required as a cofactor.

This is Probable alpha-L-glutamate ligase from Klebsiella pneumoniae (strain 342).